A 366-amino-acid chain; its full sequence is Holliday junction branch migration complex subunit RuvB (366 aa).

The disordered stretch occupies residues 1 to 49 (MAIISSKKQPPEPNGQPNKRPESAPSVPKEKVLQPEAAIDEQGKQEESI). Residues 13–210 (PNGQPNKRPE…FGLIQKLRFY (198 aa)) form a large ATPase domain (RuvB-L) region. ATP-binding positions include isoleucine 49, arginine 50, glycine 91, lysine 94, threonine 95, threonine 96, 157 to 159 (EDY), arginine 200, tyrosine 210, and arginine 247. Mg(2+) is bound at residue threonine 95. Residues 211 to 281 (EVDELSQIVL…IAAEALQLFQ (71 aa)) form a small ATPAse domain (RuvB-S) region. Positions 284–366 (PCGLDWTDRR…TPPNEQLSLL (83 aa)) are head domain (RuvB-H). Positions 339 and 344 each coordinate DNA.

The protein belongs to the RuvB family. In terms of assembly, homohexamer. Forms an RuvA(8)-RuvB(12)-Holliday junction (HJ) complex. HJ DNA is sandwiched between 2 RuvA tetramers; dsDNA enters through RuvA and exits via RuvB. An RuvB hexamer assembles on each DNA strand where it exits the tetramer. Each RuvB hexamer is contacted by two RuvA subunits (via domain III) on 2 adjacent RuvB subunits; this complex drives branch migration. In the full resolvosome a probable DNA-RuvA(4)-RuvB(12)-RuvC(2) complex forms which resolves the HJ.

It localises to the cytoplasm. It carries out the reaction ATP + H2O = ADP + phosphate + H(+). Its function is as follows. The RuvA-RuvB-RuvC complex processes Holliday junction (HJ) DNA during genetic recombination and DNA repair, while the RuvA-RuvB complex plays an important role in the rescue of blocked DNA replication forks via replication fork reversal (RFR). RuvA specifically binds to HJ cruciform DNA, conferring on it an open structure. The RuvB hexamer acts as an ATP-dependent pump, pulling dsDNA into and through the RuvAB complex. RuvB forms 2 homohexamers on either side of HJ DNA bound by 1 or 2 RuvA tetramers; 4 subunits per hexamer contact DNA at a time. Coordinated motions by a converter formed by DNA-disengaged RuvB subunits stimulates ATP hydrolysis and nucleotide exchange. Immobilization of the converter enables RuvB to convert the ATP-contained energy into a lever motion, pulling 2 nucleotides of DNA out of the RuvA tetramer per ATP hydrolyzed, thus driving DNA branch migration. The RuvB motors rotate together with the DNA substrate, which together with the progressing nucleotide cycle form the mechanistic basis for DNA recombination by continuous HJ branch migration. Branch migration allows RuvC to scan DNA until it finds its consensus sequence, where it cleaves and resolves cruciform DNA. This is Holliday junction branch migration complex subunit RuvB from Nostoc sp. (strain PCC 7120 / SAG 25.82 / UTEX 2576).